Consider the following 313-residue polypeptide: Desiccation-related protein PCC13-62 (313 aa).

Positions 1 to 26 are cleaved as a signal peptide; it reads MAQQPTFASAALVSFFLALICSCSYA.

This chain is Desiccation-related protein PCC13-62, found in Craterostigma plantagineum (Blue gem).